The following is a 211-amino-acid chain: 2,3-bisphosphoglycerate-dependent phosphoglycerate mutase (211 aa).

Substrate is bound by residues 9-16 (RHGQSDWN), 22-23 (TG), arginine 61, 88-91 (ERDY), lysine 99, 115-116 (RR), and 159-160 (GN). Residue histidine 10 is the Tele-phosphohistidine intermediate of the active site. The Proton donor/acceptor role is filled by glutamate 88.

This sequence belongs to the phosphoglycerate mutase family. BPG-dependent PGAM subfamily. In terms of assembly, homodimer.

It carries out the reaction (2R)-2-phosphoglycerate = (2R)-3-phosphoglycerate. Its pathway is carbohydrate degradation; glycolysis; pyruvate from D-glyceraldehyde 3-phosphate: step 3/5. Functionally, catalyzes the interconversion of 2-phosphoglycerate and 3-phosphoglycerate. The chain is 2,3-bisphosphoglycerate-dependent phosphoglycerate mutase from Rhizobium johnstonii (strain DSM 114642 / LMG 32736 / 3841) (Rhizobium leguminosarum bv. viciae).